A 348-amino-acid polypeptide reads, in one-letter code: MSTTGGSNPEYVIARVRARRSALFGDEEYRKLVRMGPAEIARFMEESEYEAEVNALGSRFSGVDLIEYALNQNLAKQFNDILDWADGRLYDLIARYLRKFDAWNVKTVIRGLYSGASREEVESDLIRAGEFDDRLISRLLDAGEIEEVVSVLSGTIFGDGLAAAYEEYEEVGVLVPLENAVDRAFYEQLLDDLVVGEEAKQYREFLEAEIDFRNARNALRIARSGADLDPVDYFIEGGTLFRATELASLATSPDELVSKIRDSRYGDRLSAALSDLEAADSLIGFERALDAALLEYADTLGYVFPLSVTPIVSYILAKEREVDNIRAIARGREAGLDPDAIEAELVIL.

This sequence belongs to the V-ATPase V0D/AC39 subunit family. Has multiple subunits with at least A(3), B(3), C, D, E, F, H, I and proteolipid K(x).

The protein localises to the cell membrane. Component of the A-type ATP synthase that produces ATP from ADP in the presence of a proton gradient across the membrane. The protein is A-type ATP synthase subunit C of Haloferax volcanii (strain ATCC 29605 / DSM 3757 / JCM 8879 / NBRC 14742 / NCIMB 2012 / VKM B-1768 / DS2) (Halobacterium volcanii).